Consider the following 260-residue polypeptide: PsbP domain-containing protein 4, chloroplastic (260 aa).

The protein belongs to the PsbP family.

It is found in the plastid. The protein localises to the chloroplast thylakoid lumen. The sequence is that of PsbP domain-containing protein 4, chloroplastic (PPD4) from Arabidopsis thaliana (Mouse-ear cress).